The following is a 210-amino-acid chain: Ribosomal RNA large subunit methyltransferase E (210 aa).

S-adenosyl-L-methionine is bound by residues Gly-64, Trp-66, Asp-84, Asp-100, and Asp-125. Lys-165 acts as the Proton acceptor in catalysis.

The protein belongs to the class I-like SAM-binding methyltransferase superfamily. RNA methyltransferase RlmE family.

The protein resides in the cytoplasm. It catalyses the reaction uridine(2552) in 23S rRNA + S-adenosyl-L-methionine = 2'-O-methyluridine(2552) in 23S rRNA + S-adenosyl-L-homocysteine + H(+). Functionally, specifically methylates the uridine in position 2552 of 23S rRNA at the 2'-O position of the ribose in the fully assembled 50S ribosomal subunit. The polypeptide is Ribosomal RNA large subunit methyltransferase E (Chromohalobacter salexigens (strain ATCC BAA-138 / DSM 3043 / CIP 106854 / NCIMB 13768 / 1H11)).